Here is a 236-residue protein sequence, read N- to C-terminus: Thylakoid lumenal 17.4 kDa protein, chloroplastic (236 aa).

Pentapeptide repeat domains follow at residues 124–163 (TNLKGKTLSAALMVGAKFDGADMTEVVMSKAYAVEASFKG) and 169–208 (AVIDRVNFGKSNLKGAVFRNTVLSGSTFEEANLEDVVFED).

In terms of assembly, interacts in vitro with LTO1.

Its subcellular location is the plastid. The protein resides in the chloroplast thylakoid lumen. In Arabidopsis thaliana (Mouse-ear cress), this protein is Thylakoid lumenal 17.4 kDa protein, chloroplastic.